Reading from the N-terminus, the 445-residue chain is Protein kinase C and casein kinase substrate in neurons protein 1 (445 aa).

An F-BAR domain is found at 12-282 (DETTDSFWEV…TIVSASAQED (271 aa)). 2 coiled-coil regions span residues 146 to 167 (AKKL…KEEK) and 183 to 219 (TTDQ…NKCT). A disordered region spans residues 327 to 390 (LTQVTHGAEH…PFEEDSKGVR (64 aa)). Polar residues-rich tracts occupy residues 338 to 358 (TPQT…QYSA) and 368 to 379 (TAAQSASETNGG). Residues 386–445 (SKGVRVRALYDYEGQEQDELTFKAGDELTKLEDEDEQGWCKGRLDSGQLGLYPANYVEPV) enclose the SH3 domain.

As to quaternary structure, interacts with cobl.

Its subcellular location is the cytoplasm. It localises to the cytosol. The protein localises to the cell membrane. It is found in the cell projection. The protein resides in the synapse. Its subcellular location is the synaptosome. It localises to the cytoplasmic vesicle membrane. The protein localises to the ruffle membrane. It is found in the membrane. Its function is as follows. Binds to membranes via its F-BAR domain and mediates membrane tubulation. Plays a role in cellular transport processes by recruiting dynamins to membranes. Plays a role in the reorganization of the actin cytoskeleton and in neuron morphogenesis via its interaction with cobl, and by recruiting cobl to the cell cortex. Plays a role in the regulation of neurite formation, neurite branching and the regulation of neurite length. Required for normal synaptic vesicle endocytosis; this process retrieves previously released neurotransmitters to accommodate multiple cycles of neurotransmission. Required for normal excitatory and inhibitory synaptic transmission. Required for normal embryonic development, including normal development of laterality, normal body size and shape, as well as normal brain and heart development. Required for normal development of stereocilia and kinocilia in sensory hair cells of neuromasts in the posterior lateral line organ, and thus also for balance keeping and normal swimming behavior. The sequence is that of Protein kinase C and casein kinase substrate in neurons protein 1 (pacsin1b) from Danio rerio (Zebrafish).